A 731-amino-acid polypeptide reads, in one-letter code: Penicillin-binding protein 2a (731 aa).

Topologically, residues 1–56 (MKLDKLFEKFLSLFKKETSELEDSDSTILRRSRSDRKKLAQVGPIRKFWRRYHLTK) are cytoplasmic. A helical; Signal-anchor for type II membrane protein membrane pass occupies residues 57-77 (IILILGLSAGLLVGIYLFAVA). A hydrophobic; associated with cytoplasmic membrane. Required for transglycosylase activity, but not for lipid II binding region spans residues 78-156 (KSTNVNDLQN…FLAIVTAGRS (79 aa)). The transglycosylase stretch occupies residues 78–300 (KSTNVNDLQN…SQLHDKYEGK (223 aa)). Residues 78–731 (KSTNVNDLQN…IWDSIVNLFR (654 aa)) lie on the Extracellular side of the membrane. The Proton donor; for transglycosylase activity role is filled by E131. A transpeptidase region spans residues 301–731 (ISDYRYPSYF…IWDSIVNLFR (431 aa)). Residue S410 is the Acyl-ester intermediate; for transpeptidase activity of the active site. Residues 674–694 (ANTKRQVQTNDNSQTDDNLSD) are disordered. Residues 676-690 (TKRQVQTNDNSQTDD) show a composition bias toward polar residues.

This sequence in the N-terminal section; belongs to the glycosyltransferase 51 family. The protein in the C-terminal section; belongs to the transpeptidase family. As to quaternary structure, homodimer. May also form higher order oligomers. Self-association may depend on its transmembrane and/or cytoplasmic regions. Interacts with MacP; interaction is required for the function of this protein.

The protein resides in the cell membrane. The protein localises to the secreted. It is found in the cell wall. It carries out the reaction Preferential cleavage: (Ac)2-L-Lys-D-Ala-|-D-Ala. Also transpeptidation of peptidyl-alanyl moieties that are N-acyl substituents of D-alanine.. The enzyme catalyses [GlcNAc-(1-&gt;4)-Mur2Ac(oyl-L-Ala-gamma-D-Glu-L-Lys-D-Ala-D-Ala)](n)-di-trans,octa-cis-undecaprenyl diphosphate + beta-D-GlcNAc-(1-&gt;4)-Mur2Ac(oyl-L-Ala-gamma-D-Glu-L-Lys-D-Ala-D-Ala)-di-trans,octa-cis-undecaprenyl diphosphate = [GlcNAc-(1-&gt;4)-Mur2Ac(oyl-L-Ala-gamma-D-Glu-L-Lys-D-Ala-D-Ala)](n+1)-di-trans,octa-cis-undecaprenyl diphosphate + di-trans,octa-cis-undecaprenyl diphosphate + H(+). It participates in cell wall biogenesis; peptidoglycan biosynthesis. Cell wall formation. Synthesis of cross-linked peptidoglycan (PG) from the lipid intermediates. Binds dansylated lipid II and catalyzes the polymerization of glycan chains. Hydrolyzes S2d (N-benzoyl-D-alanylmercaptoacetic acid) molecule, a synthetic thiolester analog of cell wall stem peptide. Active against bocillin, a fluorescent penicillin. No transpeptidase activity with non-fluorescent lysine-containing lipid II as substrate. This Streptococcus pneumoniae serotype 2 (strain D39 / NCTC 7466) protein is Penicillin-binding protein 2a.